Here is a 950-residue protein sequence, read N- to C-terminus: Glycine dehydrogenase (decarboxylating) 1 (950 aa).

Residue Lys704 is modified to N6-(pyridoxal phosphate)lysine.

Belongs to the GcvP family. In terms of assembly, the glycine cleavage system is composed of four proteins: P, T, L and H. The cofactor is pyridoxal 5'-phosphate.

It carries out the reaction N(6)-[(R)-lipoyl]-L-lysyl-[glycine-cleavage complex H protein] + glycine + H(+) = N(6)-[(R)-S(8)-aminomethyldihydrolipoyl]-L-lysyl-[glycine-cleavage complex H protein] + CO2. The glycine cleavage system catalyzes the degradation of glycine. The P protein binds the alpha-amino group of glycine through its pyridoxal phosphate cofactor; CO(2) is released and the remaining methylamine moiety is then transferred to the lipoamide cofactor of the H protein. The polypeptide is Glycine dehydrogenase (decarboxylating) 1 (Pseudomonas fluorescens (strain Pf0-1)).